The primary structure comprises 176 residues: MPADKICVARIGAPHGVRGAVKLWPFTADPLAVLDYGPLSTKDGKRSFEVETAREAKGHLVATLQGVVSREDAERLNGVELYIDRAQLPPPEEGEYYHADLIGLAAVDAAGAPIGKVLAIHNFGAGDIIEIAPPSGPTLLLPFTNAVVPTVDIASGRVVIELPAEIEGDDPAQADI.

The PRC barrel domain occupies 93-166; it reads EGEYYHADLI…RVVIELPAEI (74 aa).

The protein belongs to the RimM family. As to quaternary structure, binds ribosomal protein uS19.

The protein resides in the cytoplasm. Functionally, an accessory protein needed during the final step in the assembly of 30S ribosomal subunit, possibly for assembly of the head region. Essential for efficient processing of 16S rRNA. May be needed both before and after RbfA during the maturation of 16S rRNA. It has affinity for free ribosomal 30S subunits but not for 70S ribosomes. The protein is Ribosome maturation factor RimM of Rhodopseudomonas palustris (strain BisB18).